The chain runs to 526 residues: MTISNLLKQRVRYAPYLKKVKEAHELIPLFKNGQYLGWSGFTGVGTPKAVPEALIDHVEKNNLQGKLRFNLFVGASAGPEENRWAEHDMIIKRAPHQVGKPIAKAINQGRIEFFDKHLSMFPQDLTYGFYTRERKDNKILDYTIIEATAIKEDGSIVPGPSVGGSPEFITVSDKVIIEVNTATPSFEGIHDIDMPVNPPFRKPYPYLKVDDKCGVDSIPVDPEKVVAIVESTMRDQVPPNTPSDDMSRAIAGHLVEFFRNEVKHGRLPENLLPLQSGIGNIANAVIEGLAGAQFKHLTVWTEVLQDSFLDLFENGSLDYATATSVRLTEKGFDRAFANWENFKHRLCLRSQVVSNNPEMIRRLGVIAMNTPVEVDIYAHANSTNVNGSRMLNGLGGSADFLRNAKLSIMHAPSARPTKVDPTGISTIVPMASHVDQTEHDLDILVTDQGLADLRGLSPKERAREIINKCAHPDYQALLTDYLDRAEHYAKKHNCLHEPHMLKNAFKFHTNLAEKGTMKVDSWEPVD.

At T2 the chain carries N-acetylthreonine. Residue 277–281 (GIGNI) participates in CoA binding. E302 serves as the catalytic 5-glutamyl coenzyme A thioester intermediate. Residue S350 is modified to Phosphoserine. CoA is bound by residues N392 and G396.

This sequence belongs to the acetyl-CoA hydrolase/transferase family. In terms of assembly, monomer. Glycosylated; contains mannose.

The protein resides in the cytoplasm. It carries out the reaction acetyl-CoA + H2O = acetate + CoA + H(+). Presumably involved in regulating the intracellular acetyl-CoA pool for fatty acid and cholesterol synthesis and fatty acid oxidation. It may be involved in overall regulation of acetylation during melatonin synthesis. The polypeptide is Acetyl-CoA hydrolase (ACH1) (Saccharomyces cerevisiae (strain ATCC 204508 / S288c) (Baker's yeast)).